The sequence spans 320 residues: MSEPMRSYLDFEKPVAELDSKIDELRALAASGSDIHEEVAKIEEKAVQALNELYATLTPWQKTQVARHPQRPHCVDYIEGLITEFTPLAGDRKFGEDEALIGGFGRFRGESICVIGQEKGSSTETRLKHNFGMARPEGYRKAVRLMDMADRFGIPVLSLVDTAGAYPGIGAEERGQAEAIARSTDACLSLGVPNVAVVIGEGGSGGAIAIATANKVLMLEHAIYSVISPEAASSILWRDGTKAQEAANSMKITAQDLLRFGVIDQILPEPKGGAHRDPAAMIATTGDAIAAAFAELAGLDAGTVRARRRQKFLEIGRKLG.

The CoA carboxyltransferase C-terminal domain occupies 42–295 (IEEKAVQALN…GDAIAAAFAE (254 aa)).

This sequence belongs to the AccA family. In terms of assembly, acetyl-CoA carboxylase is a heterohexamer composed of biotin carboxyl carrier protein (AccB), biotin carboxylase (AccC) and two subunits each of ACCase subunit alpha (AccA) and ACCase subunit beta (AccD).

Its subcellular location is the cytoplasm. The enzyme catalyses N(6)-carboxybiotinyl-L-lysyl-[protein] + acetyl-CoA = N(6)-biotinyl-L-lysyl-[protein] + malonyl-CoA. It functions in the pathway lipid metabolism; malonyl-CoA biosynthesis; malonyl-CoA from acetyl-CoA: step 1/1. In terms of biological role, component of the acetyl coenzyme A carboxylase (ACC) complex. First, biotin carboxylase catalyzes the carboxylation of biotin on its carrier protein (BCCP) and then the CO(2) group is transferred by the carboxyltransferase to acetyl-CoA to form malonyl-CoA. This is Acetyl-coenzyme A carboxylase carboxyl transferase subunit alpha from Rhodopseudomonas palustris (strain HaA2).